The primary structure comprises 65 residues: MITDPKMLELLVCPITGGTLSLNRKTQELISLEAKLAYPIRDGVPIMLASEARPLQNNGKELHKK.

This sequence belongs to the UPF0434 family.

This Bartonella henselae (strain ATCC 49882 / DSM 28221 / CCUG 30454 / Houston 1) (Rochalimaea henselae) protein is UPF0434 protein BH12860.